The chain runs to 323 residues: Pectate lyase A (323 aa).

Residues M1–R31 form the signal peptide. The N-linked (GlcNAc...) asparagine glycan is linked to N95. Positions 136, 165, and 169 each coordinate Ca(2+). R222 is a catalytic residue.

This sequence belongs to the polysaccharide lyase 1 family. Requires Ca(2+) as cofactor.

It is found in the secreted. It catalyses the reaction Eliminative cleavage of (1-&gt;4)-alpha-D-galacturonan to give oligosaccharides with 4-deoxy-alpha-D-galact-4-enuronosyl groups at their non-reducing ends.. Pectinolytic enzyme consist of four classes of enzymes: pectin lyase, polygalacturonase, pectin methylesterase and rhamnogalacturonase. Among pectinolytic enzymes, pectin lyase is the most important in depolymerization of pectin, since it cleaves internal glycosidic bonds of highly methylated pectins. Favors pectate, the anion, over pectin, the methyl ester. The sequence is that of Pectate lyase A (plyA) from Aspergillus niger.